The chain runs to 984 residues: DNA polymerase (984 aa).

Positions 804-827 are bipartite nuclear localization signal; the sequence is DNPGKKRKSTDDNEGPSPKRRVIT. The interval 939 to 948 is monopartite nuclear localization signal; the sequence is CSVKRKRDDD. Residues 943-969 form a disordered region; the sequence is RKRDDDDDNDDDDDDDCDSSDSENDTQ. The span at 947 to 966 shows a compositional bias: acidic residues; sequence DDDDNDDDDDDDCDSSDSEN.

This sequence belongs to the DNA polymerase type-B family.

Its subcellular location is the host nucleus. The enzyme catalyses DNA(n) + a 2'-deoxyribonucleoside 5'-triphosphate = DNA(n+1) + diphosphate. Its function is as follows. Replicates the viral genome, host DNA polymerases cannot substitute for the viral enzyme in this process. This is DNA polymerase (POL) from Autographa californica nuclear polyhedrosis virus (AcMNPV).